The chain runs to 333 residues: Tetraacyldisaccharide 4'-kinase (333 aa).

Residue 57 to 64 (IVGGAGKT) coordinates ATP.

The protein belongs to the LpxK family.

The catalysed reaction is a lipid A disaccharide + ATP = a lipid IVA + ADP + H(+). The protein operates within glycolipid biosynthesis; lipid IV(A) biosynthesis; lipid IV(A) from (3R)-3-hydroxytetradecanoyl-[acyl-carrier-protein] and UDP-N-acetyl-alpha-D-glucosamine: step 6/6. Functionally, transfers the gamma-phosphate of ATP to the 4'-position of a tetraacyldisaccharide 1-phosphate intermediate (termed DS-1-P) to form tetraacyldisaccharide 1,4'-bis-phosphate (lipid IVA). In Dechloromonas aromatica (strain RCB), this protein is Tetraacyldisaccharide 4'-kinase.